The following is a 267-amino-acid chain: Energy-coupling factor transporter transmembrane protein EcfT (267 aa).

Transmembrane regions (helical) follow at residues 30–50 (FWYV…LLVA), 67–87 (WAGL…QVLF), 110–130 (ALVI…LTAT), 152–172 (VPVN…PTIM), and 247–267 (SIAL…RILL).

Belongs to the energy-coupling factor EcfT family. Forms a stable energy-coupling factor (ECF) transporter complex composed of 2 membrane-embedded substrate-binding proteins (S component), 2 ATP-binding proteins (A component) and 2 transmembrane proteins (T component). May be able to interact with more than 1 S component at a time.

It localises to the cell membrane. Its function is as follows. Transmembrane (T) component of an energy-coupling factor (ECF) ABC-transporter complex. Unlike classic ABC transporters this ECF transporter provides the energy necessary to transport a number of different substrates. This Limosilactobacillus fermentum (strain CECT 5716 / Lc40) (Lactobacillus fermentum) protein is Energy-coupling factor transporter transmembrane protein EcfT.